The primary structure comprises 187 residues: Large ribosomal subunit protein mL49 (187 aa).

Belongs to the mitochondrion-specific ribosomal protein mL49 family.

The protein localises to the mitochondrion. The polypeptide is Large ribosomal subunit protein mL49 (mrpl-49) (Caenorhabditis elegans).